Here is a 247-residue protein sequence, read N- to C-terminus: MANLFTATAPFLSLSKPFTKTASYHQCYASSSNPPEPESSSPPPPPPPPQPLASQQKRKKNVETTDWVASSLTRRFGIGAGLAWAGFLAFGVISEQIKTRIEVSQEVANTRDVEEEKEIVLPNGIRYYDQRVGGGATPRAGDLVVIDLKGQVQGTGQVFVDTFGTKDKKKMKPLALVVGSKPYSKGLCEGIDYVLRSMKAGGKRRVIVPPSLGFGVDGAELESGLQIPPNASLEYIVEIDRVSIAPA.

The transit peptide at 1 to 79 (MANLFTATAP…SSLTRRFGIG (79 aa)) directs the protein to the chloroplast. The segment at 26-64 (QCYASSSNPPEPESSSPPPPPPPPQPLASQQKRKKNVET) is disordered. The span at 34 to 51 (PPEPESSSPPPPPPPPQP) shows a compositional bias: pro residues. The region spanning 141–243 (GDLVVIDLKG…EYIVEIDRVS (103 aa)) is the PPIase FKBP-type domain.

Belongs to the FKBP-type PPIase family.

The protein localises to the plastid. It localises to the chloroplast thylakoid lumen. It catalyses the reaction [protein]-peptidylproline (omega=180) = [protein]-peptidylproline (omega=0). In terms of biological role, PPIases accelerate the folding of proteins. It catalyzes the cis-trans isomerization of proline imidic peptide bonds in oligopeptides. In Arabidopsis thaliana (Mouse-ear cress), this protein is Peptidyl-prolyl cis-trans isomerase FKBP17-2, chloroplastic (FKBP17-2).